Consider the following 161-residue polypeptide: Ribonuclease P protein component 2 (161 aa).

It belongs to the eukaryotic/archaeal RNase P protein component 2 family. As to quaternary structure, consists of a catalytic RNA component and at least 4-5 protein subunits.

It is found in the cytoplasm. It carries out the reaction Endonucleolytic cleavage of RNA, removing 5'-extranucleotides from tRNA precursor.. Part of ribonuclease P, a protein complex that generates mature tRNA molecules by cleaving their 5'-ends. In Natronomonas pharaonis (strain ATCC 35678 / DSM 2160 / CIP 103997 / JCM 8858 / NBRC 14720 / NCIMB 2260 / Gabara) (Halobacterium pharaonis), this protein is Ribonuclease P protein component 2.